We begin with the raw amino-acid sequence, 411 residues long: Imidazolonepropionase (411 aa).

Residues H78 and H80 each contribute to the Fe(3+) site. The Zn(2+) site is built by H78 and H80. Residues R87, Y150, and H183 each contribute to the 4-imidazolone-5-propanoate site. Y150 provides a ligand contact to N-formimidoyl-L-glutamate. Fe(3+) is bound at residue H248. A Zn(2+)-binding site is contributed by H248. Q251 contacts 4-imidazolone-5-propanoate. D322 is a binding site for Fe(3+). D322 contacts Zn(2+). Residues N324 and G326 each coordinate N-formimidoyl-L-glutamate. S327 contacts 4-imidazolone-5-propanoate.

The protein belongs to the metallo-dependent hydrolases superfamily. HutI family. Zn(2+) serves as cofactor. Requires Fe(3+) as cofactor.

The protein localises to the cytoplasm. It carries out the reaction 4-imidazolone-5-propanoate + H2O = N-formimidoyl-L-glutamate. The protein operates within amino-acid degradation; L-histidine degradation into L-glutamate; N-formimidoyl-L-glutamate from L-histidine: step 3/3. In terms of biological role, catalyzes the hydrolytic cleavage of the carbon-nitrogen bond in imidazolone-5-propanoate to yield N-formimidoyl-L-glutamate. It is the third step in the universal histidine degradation pathway. The polypeptide is Imidazolonepropionase (Flavobacterium johnsoniae (strain ATCC 17061 / DSM 2064 / JCM 8514 / BCRC 14874 / CCUG 350202 / NBRC 14942 / NCIMB 11054 / UW101) (Cytophaga johnsonae)).